Here is an 849-residue protein sequence, read N- to C-terminus: Putative pentatricopeptide repeat-containing protein At5g08490 (849 aa).

PPR repeat units lie at residues 20–54 (DHRVFLDVVKACASVSDLTSGRALHGCVFKLGHIA), 55–89 (CSEVSKSVLNMYAKCRRMDDCQKMFRQMDSLDPVV), 121–155 (SSVTFAIVLPLCVRLGDSYNGKSMHSYIIKAGLEK), 156–187 (DTLVGNALVSMYAKFGFIFPDAYTAFDGIADK), 188–222 (DVVSWNAIIAGFSENNMMADAFRSFCLMLKEPTEP), 223–260 (NYATIANVLPVCASMDKNIACRSGRQIHSYVVQRSWLQ), 262–296 (HVFVCNSLVSFYLRVGRIEEAASLFTRMGSKDLVS), 297–327 (WNVVIAGYASNCEWFKAFQLFHNLVHKGDVS), 329–363 (DSVTIISILPVCAQLTDLASGKEIHSYILRHSYLL), 365–399 (DTSVGNALISFYARFGDTSAAYWAFSLMSTKDIIS), 400–430 (WNAILDAFADSPKQFQFLNLLHHLLNEAITL), 431–465 (DSVTILSLLKFCINVQGIGKVKEVHGYSVKAGLLH), 469–499 (EPKLGNALLDAYAKCGNVEYAHKIFLGLSER), 501–531 (TLVSYNSLLSGYVNSGSHDDAQMLFTEMSTT), 532–566 (DLTTWSLMVRIYAESCCPNEAIGVFREIQARGMRP), 567–597 (NTVTIMNLLPVCAQLASLHLVRQCHGYIIRG), 601–631 (DIRLKGTLLDVYAKCGSLKHAYSVFQSDARR), 632–666 (DLVMFTAMVAGYAVHGRGKEALMIYSHMTESNIKP), 667–702 (DHVFITTMLTACCHAGLIQDGLQIYDSIRTVHGMKP), and 703–733 (TMEQYACAVDLIARGGRLDDAYSFVTQMPVE). The tract at residues 738–813 (IWGTLLRACT…PAGCSWLEVD (76 aa)) is type E motif. A type E(+) motif region spans residues 814–844 (GQRNVFVSGDCSHPRRDSIFDLVNALYLQMK).

Belongs to the PPR family. PCMP-E subfamily.

In Arabidopsis thaliana (Mouse-ear cress), this protein is Putative pentatricopeptide repeat-containing protein At5g08490 (PCMP-E32).